The primary structure comprises 231 residues: Cytidylate kinase (231 aa).

18 to 26 (GPSGTGKSS) provides a ligand contact to ATP.

It belongs to the cytidylate kinase family. Type 1 subfamily.

The protein localises to the cytoplasm. The catalysed reaction is CMP + ATP = CDP + ADP. It catalyses the reaction dCMP + ATP = dCDP + ADP. In Streptomyces griseus subsp. griseus (strain JCM 4626 / CBS 651.72 / NBRC 13350 / KCC S-0626 / ISP 5235), this protein is Cytidylate kinase.